The sequence spans 429 residues: Bifunctional protein GlmU (429 aa).

Residues 1-223 (MKTSILILAA…EDEFMGINDK (223 aa)) are pyrophosphorylase. Residues 8–11 (LAAG), Lys-22, and 81–82 (GT) contribute to the UDP-N-acetyl-alpha-D-glucosamine site. Asp-102 contacts Mg(2+). The UDP-N-acetyl-alpha-D-glucosamine site is built by Gly-135, Glu-149, Asn-164, and Asn-221. Asn-221 contacts Mg(2+). The tract at residues 224–244 (FELSIAENFMQEKIKKYWMQQ) is linker. Residues 245–429 (GVIFHLPQST…KDYYYKKFQK (185 aa)) form an N-acetyltransferase region. Residues Arg-308 and Lys-325 each coordinate UDP-N-acetyl-alpha-D-glucosamine. Residue His-336 is the Proton acceptor of the active site. UDP-N-acetyl-alpha-D-glucosamine-binding residues include Tyr-339 and Asn-350. Acetyl-CoA contacts are provided by residues 359 to 360 (NY), Ser-378, Ala-396, and Arg-413.

The protein in the N-terminal section; belongs to the N-acetylglucosamine-1-phosphate uridyltransferase family. In the C-terminal section; belongs to the transferase hexapeptide repeat family. As to quaternary structure, homotrimer. Mg(2+) is required as a cofactor.

Its subcellular location is the cytoplasm. It catalyses the reaction alpha-D-glucosamine 1-phosphate + acetyl-CoA = N-acetyl-alpha-D-glucosamine 1-phosphate + CoA + H(+). It carries out the reaction N-acetyl-alpha-D-glucosamine 1-phosphate + UTP + H(+) = UDP-N-acetyl-alpha-D-glucosamine + diphosphate. Its pathway is nucleotide-sugar biosynthesis; UDP-N-acetyl-alpha-D-glucosamine biosynthesis; N-acetyl-alpha-D-glucosamine 1-phosphate from alpha-D-glucosamine 6-phosphate (route II): step 2/2. The protein operates within nucleotide-sugar biosynthesis; UDP-N-acetyl-alpha-D-glucosamine biosynthesis; UDP-N-acetyl-alpha-D-glucosamine from N-acetyl-alpha-D-glucosamine 1-phosphate: step 1/1. It functions in the pathway bacterial outer membrane biogenesis; LPS lipid A biosynthesis. Catalyzes the last two sequential reactions in the de novo biosynthetic pathway for UDP-N-acetylglucosamine (UDP-GlcNAc). The C-terminal domain catalyzes the transfer of acetyl group from acetyl coenzyme A to glucosamine-1-phosphate (GlcN-1-P) to produce N-acetylglucosamine-1-phosphate (GlcNAc-1-P), which is converted into UDP-GlcNAc by the transfer of uridine 5-monophosphate (from uridine 5-triphosphate), a reaction catalyzed by the N-terminal domain. This Campylobacter jejuni subsp. jejuni serotype O:23/36 (strain 81-176) protein is Bifunctional protein GlmU.